The chain runs to 176 residues: Acireductone dioxygenase (176 aa).

The disordered stretch occupies residues 1–21 (MKAYWYDNKPGDQREPHDSGR). The span at 9–20 (KPGDQREPHDSG) shows a compositional bias: basic and acidic residues. Fe(2+) contacts are provided by His-81, His-83, Glu-87, and His-126. Ni(2+) is bound by residues His-81, His-83, Glu-87, and His-126.

This sequence belongs to the acireductone dioxygenase (ARD) family. Fe(2+) serves as cofactor. It depends on Ni(2+) as a cofactor.

It localises to the cytoplasm. Its subcellular location is the nucleus. The catalysed reaction is 1,2-dihydroxy-5-(methylsulfanyl)pent-1-en-3-one + O2 = 4-methylsulfanyl-2-oxobutanoate + formate + 2 H(+). It carries out the reaction 1,2-dihydroxy-5-(methylsulfanyl)pent-1-en-3-one + O2 = 3-(methylsulfanyl)propanoate + CO + formate + 2 H(+). It participates in amino-acid biosynthesis; L-methionine biosynthesis via salvage pathway; L-methionine from S-methyl-5-thio-alpha-D-ribose 1-phosphate: step 5/6. Its function is as follows. Catalyzes 2 different reactions between oxygen and the acireductone 1,2-dihydroxy-3-keto-5-methylthiopentene (DHK-MTPene) depending upon the metal bound in the active site. Fe-containing acireductone dioxygenase (Fe-ARD) produces formate and 2-keto-4-methylthiobutyrate (KMTB), the alpha-ketoacid precursor of methionine in the methionine recycle pathway. Ni-containing acireductone dioxygenase (Ni-ARD) produces methylthiopropionate, carbon monoxide and formate, and does not lie on the methionine recycle pathway. In Aspergillus fumigatus (strain ATCC MYA-4609 / CBS 101355 / FGSC A1100 / Af293) (Neosartorya fumigata), this protein is Acireductone dioxygenase (adi1).